The sequence spans 369 residues: MITTNDALAALCETARTQRALALDTEFVRTRTYYPQLGLIQLYDGENVALIDPLTITEWAPFQALLQDQNITKFLHAGSEDLEVFQNAFGMMPDPFIDTQVLASFVGHPLSCGFATLVEHHTGVALDKSESRTDWLARPLTERQCDYAAADVWYLLPIAHKLMEQVREAGWLTAAINECRLMTQRRGEVLDPDEAWREITNAWQLRPRQLACLKLLAGWRLRKARERDMAVNFVVREENLWKVARHMPGSLGELDGLGLSGSEIRFHGKTLLALVAQAQALLEDALPEPLANLVDMPGYRKVFKEIKALVQETSEAHKISAELMASRRQINQLLNWHWKLKPQNQLPELISGWRGELLGEALKTLLQNY.

Positions 1 to 166 (MITTNDALAA…PIAHKLMEQV (166 aa)) constitute a 3'-5' exonuclease domain. The HRDC domain maps to 206–285 (RPRQLACLKL…AQAQALLEDA (80 aa)).

It belongs to the RNase D family. A divalent metal cation serves as cofactor.

The protein resides in the cytoplasm. It carries out the reaction Exonucleolytic cleavage that removes extra residues from the 3'-terminus of tRNA to produce 5'-mononucleotides.. Its function is as follows. Exonuclease involved in the 3' processing of various precursor tRNAs. Initiates hydrolysis at the 3'-terminus of an RNA molecule and releases 5'-mononucleotides. In Cronobacter turicensis (strain DSM 18703 / CCUG 55852 / LMG 23827 / z3032), this protein is Ribonuclease D.